The sequence spans 480 residues: Histone deacetylase 1 (480 aa).

The histone deacetylase stretch occupies residues 9–321; the sequence is RKVCYYYDGD…WTYETAVALD (313 aa). 1D-myo-inositol 1,4,5,6-tetrakisphosphate is bound by residues glycine 27 and lysine 31. Residue histidine 141 is part of the active site. 3 residues coordinate Zn(2+): aspartate 176, histidine 178, and aspartate 264. Arginine 270 is a binding site for 1D-myo-inositol 1,4,5,6-tetrakisphosphate. Residues 376 to 480 form a disordered region; sequence APGVQMQPIP…KGVKEETKST (105 aa). The segment covering 388–400 has biased composition (acidic residues); that stretch reads AVQEDSGDEEEED. The segment covering 401–416 has biased composition (basic and acidic residues); it reads PEKRISIRNSDKRISC. The span at 417–427 shows a compositional bias: acidic residues; sequence DEEFSDSEDEG. Residues 455-480 are compositionally biased toward basic and acidic residues; it reads KDEKEEEKAKEEKAEPKGVKEETKST.

The protein belongs to the histone deacetylase family. HD type 1 subfamily. The cofactor is Zn(2+).

Its subcellular location is the nucleus. The enzyme catalyses N(6)-acetyl-L-lysyl-[histone] + H2O = L-lysyl-[histone] + acetate. It catalyses the reaction N(6)-acetyl-L-lysyl-[protein] + H2O = L-lysyl-[protein] + acetate. The catalysed reaction is N(6)-(2E)-butenoyl-L-lysyl-[protein] + H2O = (2E)-2-butenoate + L-lysyl-[protein]. It carries out the reaction N(6)-[(S)-lactoyl]-L-lysyl-[protein] + H2O = (S)-lactate + L-lysyl-[protein]. Its activity is regulated as follows. Inositol tetraphosphate (1D-myo-inositol 1,4,5,6-tetrakisphosphate) may act as an intermolecular glue between HDAC1 and N-Cor repressor complex components. Functionally, histone deacetylase that catalyzes the deacetylation of lysine residues on the N-terminal part of the core histones (H2A, H2B, H3 and H4). Histone deacetylation gives a tag for epigenetic repression and plays an important role in transcriptional regulation, cell cycle progression and developmental events. Histone deacetylases act via the formation of large multiprotein complexes. Also functions as a deacetylase for non-histone proteins. In addition to protein deacetylase activity, also has protein-lysine deacylase activity: acts as a protein decrotonylase and delactylase by mediating decrotonylation ((2E)-butenoyl) and delactylation (lactoyl) of histones, respectively. This chain is Histone deacetylase 1 (HDAC1), found in Gallus gallus (Chicken).